The sequence spans 274 residues: Peroxiredoxin-4 (274 aa).

Positions 1-40 are cleaved as a signal peptide; sequence MEARSKLLDGTTASRRWTRKLVLLLPPLLLFLLRTESLQG. Residues 82-240 enclose the Thioredoxin domain; the sequence is AKISKPAPYW…TLRLVQAFQY (159 aa). Catalysis depends on C127, which acts as the Cysteine sulfenic acid (-SOH) intermediate.

The protein belongs to the peroxiredoxin family. AhpC/Prx1 subfamily. Homodimer; disulfide-linked, upon oxidation. 5 homodimers assemble to form a ring-like decamer. The enzyme can be inactivated by further oxidation of the cysteine sulfenic acid (C(P)-SOH) to sulphinic acid (C(P)-SO2H) and sulphonic acid (C(P)-SO3H) instead of its condensation to a disulfide bond.

The protein resides in the cytoplasm. It localises to the endoplasmic reticulum. It carries out the reaction a hydroperoxide + [thioredoxin]-dithiol = an alcohol + [thioredoxin]-disulfide + H2O. Thiol-specific peroxidase that catalyzes the reduction of hydrogen peroxide and organic hydroperoxides to water and alcohols, respectively. Plays a role in cell protection against oxidative stress by detoxifying peroxides and as sensor of hydrogen peroxide-mediated signaling events. Regulates the activation of NF-kappa-B in the cytosol by a modulation of I-kappa-B-alpha phosphorylation. This is Peroxiredoxin-4 (Prdx4) from Mus musculus (Mouse).